The primary structure comprises 349 residues: tRNA pseudouridine synthase D (349 aa).

Phe27 serves as a coordination point for substrate. Asp80 acts as the Nucleophile in catalysis. Asn129 provides a ligand contact to substrate. In terms of domain architecture, TRUD spans 155–303; it reads GVPNYFGAQR…VEAARRAMLL (149 aa). Phe329 contacts substrate.

The protein belongs to the pseudouridine synthase TruD family.

The catalysed reaction is uridine(13) in tRNA = pseudouridine(13) in tRNA. Responsible for synthesis of pseudouridine from uracil-13 in transfer RNAs. The chain is tRNA pseudouridine synthase D from Klebsiella pneumoniae (strain 342).